Reading from the N-terminus, the 82-residue chain is MMVSIIVPSLVKESSRESLLATTIDNSTLSTTPSPKLPTLEISGGSAKEIWTKIDQNTAPSTPSKILPKRLPSQSNLNNNNN.

Positions 55–64 (DQNTAPSTPS) are enriched in polar residues. Residues 55-82 (DQNTAPSTPSKILPKRLPSQSNLNNNNN) are disordered.

This is an uncharacterized protein from Dictyostelium discoideum (Social amoeba).